Consider the following 174-residue polypeptide: Ribosome maturation factor RimM (174 aa).

Residues 98–171 enclose the PRC barrel domain; it reads EDEFYFHEII…KIKIHVMEGL (74 aa).

It belongs to the RimM family. As to quaternary structure, binds ribosomal protein uS19.

Its subcellular location is the cytoplasm. Functionally, an accessory protein needed during the final step in the assembly of 30S ribosomal subunit, possibly for assembly of the head region. Essential for efficient processing of 16S rRNA. May be needed both before and after RbfA during the maturation of 16S rRNA. It has affinity for free ribosomal 30S subunits but not for 70S ribosomes. The protein is Ribosome maturation factor RimM of Bacillus velezensis (strain DSM 23117 / BGSC 10A6 / LMG 26770 / FZB42) (Bacillus amyloliquefaciens subsp. plantarum).